The chain runs to 462 residues: Putative ABC transporter A445L (462 aa).

It belongs to the protein kinase superfamily. ADCK protein kinase family.

This is Putative ABC transporter A445L from Chlorella (PBCV-1).